Here is a 248-residue protein sequence, read N- to C-terminus: tRNA (guanine-N(1)-)-methyltransferase (248 aa).

S-adenosyl-L-methionine-binding positions include G116 and 136-141 (VGDYVL).

This sequence belongs to the RNA methyltransferase TrmD family. Homodimer.

It is found in the cytoplasm. It carries out the reaction guanosine(37) in tRNA + S-adenosyl-L-methionine = N(1)-methylguanosine(37) in tRNA + S-adenosyl-L-homocysteine + H(+). Specifically methylates guanosine-37 in various tRNAs. The polypeptide is tRNA (guanine-N(1)-)-methyltransferase (Psychromonas ingrahamii (strain DSM 17664 / CCUG 51855 / 37)).